A 257-amino-acid polypeptide reads, in one-letter code: Ribosomal RNA small subunit methyltransferase J (257 aa).

Residues 107-108 (RD), 123-124 (ER), and aspartate 177 each bind S-adenosyl-L-methionine.

It belongs to the methyltransferase superfamily. RsmJ family.

The protein resides in the cytoplasm. It carries out the reaction guanosine(1516) in 16S rRNA + S-adenosyl-L-methionine = N(2)-methylguanosine(1516) in 16S rRNA + S-adenosyl-L-homocysteine + H(+). Specifically methylates the guanosine in position 1516 of 16S rRNA. In Haemophilus influenzae (strain PittGG), this protein is Ribosomal RNA small subunit methyltransferase J.